The sequence spans 317 residues: Thymidylate synthase (317 aa).

DUMP is bound by residues arginine 24 and 179–180; that span reads RR. Catalysis depends on cysteine 199, which acts as the Nucleophile. DUMP is bound by residues 219-222, asparagine 230, and 260-262; these read RSAD and HIY. Aspartate 222 serves as a coordination point for (6R)-5,10-methylene-5,6,7,8-tetrahydrofolate. A (6R)-5,10-methylene-5,6,7,8-tetrahydrofolate-binding site is contributed by alanine 316.

Belongs to the thymidylate synthase family. Bacterial-type ThyA subfamily. As to quaternary structure, homodimer.

It is found in the cytoplasm. It carries out the reaction dUMP + (6R)-5,10-methylene-5,6,7,8-tetrahydrofolate = 7,8-dihydrofolate + dTMP. The protein operates within pyrimidine metabolism; dTTP biosynthesis. Catalyzes the reductive methylation of 2'-deoxyuridine-5'-monophosphate (dUMP) to 2'-deoxythymidine-5'-monophosphate (dTMP) while utilizing 5,10-methylenetetrahydrofolate (mTHF) as the methyl donor and reductant in the reaction, yielding dihydrofolate (DHF) as a by-product. This enzymatic reaction provides an intracellular de novo source of dTMP, an essential precursor for DNA biosynthesis. The polypeptide is Thymidylate synthase (Oceanobacillus iheyensis (strain DSM 14371 / CIP 107618 / JCM 11309 / KCTC 3954 / HTE831)).